A 756-amino-acid chain; its full sequence is U3 small nucleolar RNA-associated protein 25 homolog (756 aa).

The tract at residues methionine 1 to aspartate 159 is disordered. Promotes p53/TP53 degradation stretches follow at residues methionine 1–alanine 185 and valine 573–glutamate 635. The residue at position 10 (serine 10) is a Phosphoserine. Basic and acidic residues predominate over residues arginine 25–lysine 43. Residues serine 50, serine 52, serine 58, serine 60, serine 62, and serine 64 each carry the phosphoserine modification. 2 stretches are compositionally biased toward acidic residues: residues aspartate 54–serine 64 and glutamate 84–alanine 121. The represses p53/TP53 degradation stretch occupies residues leucine 636–tyrosine 697.

Belongs to the UTP25 family. Interacts with CAPN3; the interaction is required for CAPN3 translocation to the nucleolus. In terms of processing, phosphorylated. Phosphorylation is required to promote p53/TP53 degradation in the nucleolus which promotes cell cycle progression and liver development. As to expression, expressed in colon.

The protein localises to the nucleus. It localises to the nucleolus. Component of the ribosomal small subunit processome for the biogenesis of ribosomes, functions in pre-ribosomal RNA (pre-rRNA) processing. Essential for embryonic development in part through the regulation of p53 pathway. Controls the expansion growth of digestive organs and liver. Also involved in the sympathetic neuronal development. Mediates, with CAPN3, the proteasome-independent degradation of p53/TP53. This chain is U3 small nucleolar RNA-associated protein 25 homolog, found in Homo sapiens (Human).